The chain runs to 486 residues: L-arabinose isomerase (486 aa).

Mn(2+) is bound by residues Glu299, Glu324, His341, and His440.

It belongs to the arabinose isomerase family. Requires Mn(2+) as cofactor.

It carries out the reaction beta-L-arabinopyranose = L-ribulose. It participates in carbohydrate degradation; L-arabinose degradation via L-ribulose; D-xylulose 5-phosphate from L-arabinose (bacterial route): step 1/3. In terms of biological role, catalyzes the conversion of L-arabinose to L-ribulose. The polypeptide is L-arabinose isomerase (Shouchella clausii (strain KSM-K16) (Alkalihalobacillus clausii)).